The chain runs to 443 residues: Xaa-Pro dipeptidase (443 aa).

Residues Asp-246, Asp-257, His-339, Glu-384, and Glu-423 each contribute to the Mn(2+) site.

Belongs to the peptidase M24B family. Bacterial-type prolidase subfamily. Mn(2+) serves as cofactor.

The catalysed reaction is Xaa-L-Pro dipeptide + H2O = an L-alpha-amino acid + L-proline. Splits dipeptides with a prolyl residue in the C-terminal position. This Escherichia coli (strain SMS-3-5 / SECEC) protein is Xaa-Pro dipeptidase.